Here is a 464-residue protein sequence, read N- to C-terminus: UNC93-like protein 3 (464 aa).

Helical transmembrane passes span 31–51 (VHIL…AQNL), 62–82 (ISLG…SLVV), 84–104 (LMGS…FVAA), 110–130 (WFTM…IWVG), 160–180 (EFWA…LALL), 192–212 (TLLM…MFFI), 251–271 (LLIV…WAEF), 275–295 (IVTP…YGAL), 313–333 (ITFI…WLLL), 341–361 (VLGT…DGIL), and 392–412 (IAIV…IVML).

Belongs to the unc-93 family.

The protein resides in the membrane. This Arabidopsis thaliana (Mouse-ear cress) protein is UNC93-like protein 3.